A 66-amino-acid chain; its full sequence is Large ribosomal subunit protein bL35 (66 aa).

Belongs to the bacterial ribosomal protein bL35 family.

The protein is Large ribosomal subunit protein bL35 of Brucella anthropi (strain ATCC 49188 / DSM 6882 / CCUG 24695 / JCM 21032 / LMG 3331 / NBRC 15819 / NCTC 12168 / Alc 37) (Ochrobactrum anthropi).